Here is a 424-residue protein sequence, read N- to C-terminus: Dehydrogenase FUM7 (424 aa).

The protein belongs to the iron-containing alcohol dehydrogenase family. It depends on Fe cation as a cofactor.

The protein operates within mycotoxin biosynthesis. Its function is as follows. Dehydrogenase; part of the gene cluster that mediates the biosynthesis of fumonisins B1 (FB1), B2 (FB2), B3 (FB3), and B4 (FB4), which are carcinogenic mycotoxins. Within the pathway, FUM7 is involved the addition of the tricarballylic moieties to the carbon backbone. FUM7 dehydrogenase removes the C-3 hydroxyl of citrate to form tricarballylic acid either before or after the CoA activation by the FUM10 acyl-CoA synthetase and FUM14 catalyzed esterification of CoA-activated tricarballylic acid to the C-14 and C-15 hydroxyls of the fumonisin backbone. The biosynthesis starts with the FUM1-catalyzed carbon chain assembly from one molecule of acetyl-CoA, eight molecules of malonyl-CoA, and two molecules of methionine (in S-adenosyl form). The C18 polyketide chain is released from the enzyme by a nucleophilic attack of a carbanion, which is derived from R-carbon of alanine by decarboxylation, on the carbonyl carbon of polyketide acyl chain. This step is catalyzed by the pyridoxal 5'-phosphate-dependent aminoacyl transferase FUM8. The resultant 3-keto intermediate is then stereospecifically reduced to a 3-hydroxyl product by reductase FUM13. Subsequent oxidations at C-10 by the cytochrome P450 monooxygenase FUM2, C-14 and C-15 by FUM6, FUM12 or FUM15, tricarballylic esterification of the hydroxyl groups on C-14 and C-15 by acyltransferase FUM14, and C-5 hydroxylation by 2-keto-glutarate-dependent dioxygenase FUM3 furnish the biosynthesis of fumonisins. The tricarballylic moieties are most likely derived from the citric acid cycle, and their addition to the carbon backbone may involve FUM7, FUM10, FUM11 and FUM14. This Gibberella moniliformis (strain M3125 / FGSC 7600) (Maize ear and stalk rot fungus) protein is Dehydrogenase FUM7.